The chain runs to 374 residues: MGNQTSKKSQETSAKSVHYTTELRSYAAACKADTELQSFDTCLQARTSHVISTLATGVEVRALSFDSLKEVTQCLLEMNQEVVKVILDCKKDIWKNQEMFELVEDYFENSLKTLDFCAALEKGLRRARDSHLLILVALQQFEDESLVQGGNGYKKTLEELKNFKDAESPFNEDFFKMFQSVYKQQMLMLEKLQHRKNKLDKKLKCIHTWRKLSSIIFVATFATVLICSVVAAAMAAPPVAAALAAATAVPLGSMGKWIDSLWKNYENALKGQKEVISSMQAGTFVAVKDLDNIRVLIERLEIEITGMVKSAEFAVEHNAVKIGIDDIKKKLEVFKKNVEELGTQADLCSRDIRRARTVILQRIIKHPNNASSST.

The next 2 helical transmembrane spans lie at 215–235 (IIFV…AAMA) and 238–258 (PVAA…GKWI).

The protein belongs to the UPF0496 family.

The protein localises to the membrane. This Arabidopsis thaliana (Mouse-ear cress) protein is UPF0496 protein At4g34320.